A 205-amino-acid chain; its full sequence is Holliday junction resolvase RecU (205 aa).

Mg(2+) contacts are provided by threonine 83, aspartate 85, glutamate 98, and glutamine 117.

It belongs to the RecU family. Requires Mg(2+) as cofactor.

The protein resides in the cytoplasm. It carries out the reaction Endonucleolytic cleavage at a junction such as a reciprocal single-stranded crossover between two homologous DNA duplexes (Holliday junction).. Endonuclease that resolves Holliday junction intermediates in genetic recombination. Cleaves mobile four-strand junctions by introducing symmetrical nicks in paired strands. Promotes annealing of linear ssDNA with homologous dsDNA. Required for DNA repair, homologous recombination and chromosome segregation. The protein is Holliday junction resolvase RecU of Streptococcus suis (strain 98HAH33).